Here is a 62-residue protein sequence, read N- to C-terminus: uncharacterized protein (62 aa).

Positions 26 to 62 (YELATLYEAMQKENEEQIEQSKNKLERLRKEWIRLNG) form a coiled coil.

This is an uncharacterized protein from Bacillus subtilis (strain 168).